An 802-amino-acid polypeptide reads, in one-letter code: MARYNPLAFTSGPVVFFITITYTALLIALLLTHLTLPSYPSHPPLGINLTQAWSDLEHITREFHPYNSHANDNVRAYLLSRIEHMMASKKLGSDQVQIIDDNISNATFSSGNTTVYFEGTNLIVAVRGSHDDQAFNDRNRRPDNGGVLVNAHYDSVSSGYGATDDGVGVVSVLQLLSFFTEPKNWPKRTVVLLLNNGEEDFLNGAKAFMRHDISQVPHTFVNLEGAGAGGRAAMFRSTDTHVTRFYRKSEHPFGTVVSGDGFKKGLVRSETDYKVFFEELGLAGLDIAFIEPRAKYHTIEDSTRETSLNSVWHMLSAAIATTSGLAADTSTPDRESHDDAVWFDIFGKVFIVFQLHTFFALCVTLLVVAPLTLIGLAWSLHKADRNYLFARKAFVYSADDDEPIHLYGWRGFFRFPIAFGIATSIVVGLAMMLSAWFAVSWFLLHGADAMRPSALQRMYSLLWLFIGSFCLLVFFTILANNHQVAAGYPSLFCFATVFLANVLSFLELFLAPPKSAYAWNVHQNADGGSRPLTSSATAARSDNRATTDDDATETTSLLSGNRRSFARHDAGRRDAINEGANSQEPESRRRLDLGQPHSGEQEWSGKLPSWIWIVQFSLLAPMIVILVGQIALLLTSALYQTPSDGNSPLYIYTSIAALAVFLVAPIGPFIHRFTHHVPTFLFLLCVATTIYNLVAFPFSEQHKLKVYFVQRVDCDTGVNTVSLTGLDGYVQRIAGNMPSAQQSSLNCSTPDIVTRKELRMCEWEGLHPNVVSPTSQYSNKTRATDWIDYEIFHDDSNNRGRR.

Topologically, residues Met1–Pro13 are cytoplasmic. The helical transmembrane segment at Val14–Leu34 threads the bilayer. The Vacuolar portion of the chain corresponds to Thr35–Thr357. Residues Asn48, Asn102, Asn105, and Asn112 are each glycosylated (N-linked (GlcNAc...) asparagine). Positions 152 and 164 each coordinate Zn(2+). The Proton acceptor role is filled by Glu198. Zn(2+) contacts are provided by Glu199, Glu224, and His297. Residues Phe358–Trp378 form a helical membrane-spanning segment. Residues Ser379–Phe389 lie on the Cytoplasmic side of the membrane. Residues Ala390–Trp409 form a helical membrane-spanning segment. Over Arg410–Thr423 the chain is Vacuolar. The chain crosses the membrane as a helical span at residues Ser424 to Leu444. The Cytoplasmic portion of the chain corresponds to His445–Arg457. Residues Met458–Leu478 form a helical membrane-spanning segment. The Vacuolar segment spans residues Ala479–Ser490. The helical transmembrane segment at Leu491–Ala511 threads the bilayer. The Cytoplasmic segment spans residues Pro512 to Ser609. Disordered regions lie at residues Gly528–Thr554 and Ala570–Trp603. A helical transmembrane segment spans residues Trp610–Ile630. Residues Ala631 to Leu649 are Vacuolar-facing. Residues Tyr650 to Ile670 form a helical membrane-spanning segment. At His671–Val677 the chain is on the cytoplasmic side. Residues Pro678 to Phe698 traverse the membrane as a helical segment. Topologically, residues Ser699 to Arg802 are vacuolar. N-linked (GlcNAc...) asparagine glycosylation is found at Asn746 and Asn779.

The protein belongs to the peptidase M28 family. Zn(2+) serves as cofactor.

It is found in the vacuole membrane. May be involved in vacuolar sorting and osmoregulation. This is Vacuolar membrane protease from Leptosphaeria maculans (strain JN3 / isolate v23.1.3 / race Av1-4-5-6-7-8) (Blackleg fungus).